The chain runs to 840 residues: Urease (840 aa).

The Urease domain maps to 402–840 (GAIDCHVHYI…VPLSRNYFLF (439 aa)). Residues His-407, His-409, and Lys-490 each coordinate Ni(2+). Residue Lys-490 is modified to N6-carboxylysine. A substrate-binding site is contributed by His-492. Residues His-519 and His-545 each contribute to the Ni(2+) site. The active-site Proton donor is the His-593. Asp-633 lines the Ni(2+) pocket.

The protein in the C-terminal section; belongs to the metallo-dependent hydrolases superfamily. Urease alpha subunit family. As to quaternary structure, homohexamer. Other oligomeric forms may exist depending on pH and presence of salts. Ni cation serves as cofactor. In terms of processing, carboxylation allows a single lysine to coordinate two nickel ions.

The catalysed reaction is urea + 2 H2O + H(+) = hydrogencarbonate + 2 NH4(+). The protein operates within nitrogen metabolism; urea degradation; CO(2) and NH(3) from urea (urease route): step 1/1. P-hydroxymercuribenzoate irreversibly abolishes ureolytic activity, but does not inhibit the ability to activate platelets. Also inhibited by acetohydroxamic acid (AHA), a chelator of Ni2+ and Zn2+ ions. In terms of biological role, urea hydrolase involved in nitrogen recycling from ureide, purine, and arginine catabolism. Is known to be highly toxic and lethal when given by intravenous route, producing convulsions and other signs of central nervous system intoxication associated with the high levels of ammonia formed in the blood of mice and rabbits. Is neurotoxic in mammals, when directly injected into hippocampus. It may induce seizures by acting at a neuronal network level, thereby disturbing electroencephalographic rhythms and causing metabolic alterations in key areas related to epileptogenesis and to neurogenic pulmonary edema. It increases calcium influx and neuronal firing rate in the hippocampus. Is able to insert itself into lipid bilayers, altering physicochemical properties of artificial membranes, and forming cation-selective ion channels. In vitro, has the ability to induce platelet aggregation, platelet granules secretion and release of ATP. In contrast to canatoxin, another urease from C.ensiformis, is not lethal to mice when intraperitoneally injected. In Canavalia ensiformis (Jack bean), this protein is Urease.